A 380-amino-acid chain; its full sequence is GATOR1 complex protein NPRL2 (380 aa).

Positions 1–133 (MGSSCRIECI…SKQKLVPIMT (133 aa)) are interaction with PDPK1. Arginine 78 is a GDP binding site. Arginine 78 carries the asymmetric dimethylarginine modification. Glycyl lysine isopeptide (Lys-Gly) (interchain with G-Cter in ubiquitin) cross-links involve residues lysine 158 and lysine 357.

This sequence belongs to the NPR2 family. In terms of assembly, within the GATOR complex, component of the GATOR1 subcomplex, made of DEPDC5, NPRL2 and NPRL3. GATOR1 mediates the strong interaction of the GATOR complex with small GTPases Rag (RagA/RRAGA, RagB/RRAGB, RagC/RRAGC and/or RagD/RRAGD) heterodimers. GATOR1 interacts with GPR155/LYCHOS; interaction takes place in presence of cholesterol and prevents interaction between GATOR1 and KICSTOR. Interacts with PDPK1. In terms of processing, in the presence of abundant amino acids, ubiquitinated at Lys-158 and Lys-357 via 'Lys-6'-linked ubiquitination by the WDR24 component of the GATOR2 complex, thereby inhibiting the GATOR1 complex and promoting mTORC1 activation. Post-translationally, asymmetric dimethylation at Arg-78 by PRMT1 inhibits the GTPase activator activity of the GATOR1 complex and consequently inducing timely mTORC1 activation under methionine-sufficient conditions.

It localises to the lysosome membrane. Catalytic component of the GATOR1 complex, a multiprotein complex that functions as an inhibitor of the amino acid-sensing branch of the mTORC1 pathway. In response to amino acid depletion, the GATOR1 complex has GTPase activating protein (GAP) activity and strongly increases GTP hydrolysis by RagA/RRAGA (or RagB/RRAGB) within heterodimeric Rag complexes, thereby turning them into their inactive GDP-bound form, releasing mTORC1 from lysosomal surface and inhibiting mTORC1 signaling. In the presence of abundant amino acids, the GATOR1 complex is ubiquitinated and inhibited by GATOR2. Within the GATOR1 complex, NPRL2 constitutes the catalytic subunit that mediates the GTPase activator activity and under methionine-sufficient conditions, the GTPase activator activity is inhibited by PRMT1 through methylation and consequently inducing timely mTORC1 activation. Its function is as follows. Suppresses Src-dependent tyrosine phosphorylation and activation of PDPK1 and its downstream signaling. Down-regulates PDPK1 kinase activity by interfering with tyrosine phosphorylation at 'Tyr-9', 'Tyr-373' and 'Tyr-376' residues. May act as a tumor suppressor. Suppresses cell growth and enhances sensitivity to various anticancer drugs. The polypeptide is GATOR1 complex protein NPRL2 (Bos taurus (Bovine)).